A 3135-amino-acid chain; its full sequence is Gametocyte surface protein P230 (3135 aa).

Positions 1–20 (MKKIITLKNLFLIILVYIFS) are cleaved as a signal peptide. Asparagine 76, asparagine 111, asparagine 135, and asparagine 239 each carry an N-linked (GlcNAc...) asparagine glycan. The disordered stretch occupies residues 266–470 (EEDMSPRDNF…EEKDEGGESF (205 aa)). Composition is skewed to acidic residues over residues 276–321 (VIDD…EEQL) and 329–345 (VGAESSEESFNDEDEDS). Over residues 346-358 (VEARDGDMIRVDE) the composition is skewed to basic and acidic residues. 2 stretches are compositionally biased toward acidic residues: residues 376 to 444 (DVDE…EGEY) and 458 to 467 (GDEEEKDEGG). Residue asparagine 585 is glycosylated (N-linked (GlcNAc...) asparagine). 2 consecutive 6-Cys domains span residues 589–730 (KEYV…VEPY) and 733–887 (KING…INEE). 4 cysteine pairs are disulfide-bonded: cysteine 593-cysteine 611, cysteine 626-cysteine 706, cysteine 737-cysteine 781, and cysteine 804-cysteine 862. 7 N-linked (GlcNAc...) asparagine glycosylation sites follow: asparagine 821, asparagine 829, asparagine 889, asparagine 961, asparagine 1079, asparagine 1089, and asparagine 1153. 4 consecutive 6-Cys domains span residues 918 to 1133 (HDYT…ISKQ), 1136 to 1275 (KIKG…LKRE), 1285 to 1432 (KIYK…VSKR), and 1435 to 1560 (KVKG…YKKL). 3 cysteine pairs are disulfide-bonded: cysteine 1140–cysteine 1161, cysteine 1175–cysteine 1251, and cysteine 1200–cysteine 1249. 7 N-linked (GlcNAc...) asparagine glycosylation sites follow: asparagine 1267, asparagine 1300, asparagine 1452, asparagine 1492, asparagine 1508, asparagine 1621, and asparagine 1624. 3 disulfides stabilise this stretch: cysteine 1439/cysteine 1459, cysteine 1473/cysteine 1534, and cysteine 1483/cysteine 1532. 4 consecutive 6-Cys domains span residues 1694-1907 (NRHV…ISNS), 1910-2035 (KING…LNKD), 2052-2199 (NVHL…VRKN), and 2204-2374 (SFKL…SDNR). 2 cysteine pairs are disulfide-bonded: cysteine 1698/cysteine 1726 and cysteine 1740/cysteine 1881. Residues asparagine 1753, asparagine 1804, asparagine 1882, asparagine 1920, asparagine 1954, and asparagine 1972 are each glycosylated (N-linked (GlcNAc...) asparagine). 4 disulfide bridges follow: cysteine 1914–cysteine 1938, cysteine 1952–cysteine 2017, cysteine 1963–cysteine 2015, and cysteine 2056–cysteine 2074. N-linked (GlcNAc...) asparagine glycosylation is found at asparagine 2178 and asparagine 2199. 3 disulfide bridges follow: cysteine 2208–cysteine 2229, cysteine 2243–cysteine 2356, and cysteine 2254–cysteine 2354. Asparagine 2312 and asparagine 2351 each carry an N-linked (GlcNAc...) asparagine glycan. The segment at 2410-2432 (IKQQQEEEQQEQILKDQDDRLSR) is disordered. The segment covering 2422 to 2432 (ILKDQDDRLSR) has biased composition (basic and acidic residues). Asparagine 2439, asparagine 2457, asparagine 2466, asparagine 2504, asparagine 2586, asparagine 2611, asparagine 2650, asparagine 2677, and asparagine 2688 each carry an N-linked (GlcNAc...) asparagine glycan. 4 6-Cys domains span residues 2448 to 2663 (NEHI…ISSN), 2666 to 2827 (IIHG…IDEK), 2831 to 2979 (GKDI…INQG), and 2982 to 3113 (EIHG…PEPQ). 2 cysteine pairs are disulfide-bonded: cysteine 2452–cysteine 2476 and cysteine 2490–cysteine 2638. Intrachain disulfides connect cysteine 2670–cysteine 2706, cysteine 2720–cysteine 2804, and cysteine 2730–cysteine 2802. Asparagine 2952 carries an N-linked (GlcNAc...) asparagine glycan. A disulfide bond links cysteine 2986 and cysteine 3010. Asparagine 3011, asparagine 3016, asparagine 3066, asparagine 3093, and asparagine 3096 each carry an N-linked (GlcNAc...) asparagine glycan. 2 cysteine pairs are disulfide-bonded: cysteine 3024–cysteine 3090 and cysteine 3035–cysteine 3088.

As to quaternary structure, heterodimer; heterodimerizes with PF45/48. May be processed into a 310 kDa form as the parasite emerges from the host erythrocytes.

Its subcellular location is the cell surface. It localises to the cell membrane. In terms of biological role, gametocyte surface protein required for male/female gamete fusion. Also required for male gamete exflagellation and interaction with host erythrocytes. This is Gametocyte surface protein P230 (PFS230) from Plasmodium falciparum (isolate 3D7).